The primary structure comprises 513 residues: tRNA A64-2'-O-ribosylphosphate transferase (513 aa).

TRNA backbone modifying enzyme that mediates initiator/ elongator tRNA discrimination. This enzyme modifies exclusively the initiator tRNA in position 64 using 5'-phosphoribosyl-1'-pyrophosphate as the modification donor. Recognize the stem-loop IV region that is unique in eukaryotic cytoplasmic initiator tRNAs. This is tRNA A64-2'-O-ribosylphosphate transferase (RIT1) from Saccharomyces cerevisiae (strain ATCC 204508 / S288c) (Baker's yeast).